Consider the following 200-residue polypeptide: Transcription elongation factor A protein-like 3 (200 aa).

The span at 1-19 (MEEVRGENEGKLEKEGKPE) shows a compositional bias: basic and acidic residues. Positions 1–200 (MEEVRGENEG…QRGLHDIPYL (200 aa)) are disordered. The segment covering 20 to 34 (DEVEPEDEEKSDEDE) has biased composition (acidic residues). Ser30 is subject to Phosphoserine. Composition is skewed to basic and acidic residues over residues 47-85 (GKPEEEAKPDEQGQDEGKPEKQGKSDGEGKRQGESKPDS), 94-106 (RAAEKRPAEDYVP), and 114-153 (DRGTDDSPKNSQEDLQDRHVSSEEMMRECADMTRAQEELR).

It belongs to the TFS-II family. TFA subfamily.

It is found in the nucleus. Functionally, may be involved in transcriptional regulation. The polypeptide is Transcription elongation factor A protein-like 3 (Tceal3) (Mus musculus (Mouse)).